We begin with the raw amino-acid sequence, 204 residues long: Large ribosomal subunit protein uL4 (204 aa).

Positions 44–76 are disordered; the sequence is KRQGTQSAKTRSEVRGGGIKPWRQKGTGRARQG.

It belongs to the universal ribosomal protein uL4 family. Part of the 50S ribosomal subunit.

Functionally, one of the primary rRNA binding proteins, this protein initially binds near the 5'-end of the 23S rRNA. It is important during the early stages of 50S assembly. It makes multiple contacts with different domains of the 23S rRNA in the assembled 50S subunit and ribosome. Forms part of the polypeptide exit tunnel. This chain is Large ribosomal subunit protein uL4, found in Clostridium perfringens (strain ATCC 13124 / DSM 756 / JCM 1290 / NCIMB 6125 / NCTC 8237 / Type A).